A 470-amino-acid chain; its full sequence is MPLNKKVLAIVLAGGEGNRLMPLTADRAKPAVPFAGSYRLIDFAISNLVNSRYLQIVVLTQYKSHSLDRHISEAWRMSTQLGNYVASVPAQQRVGKSWFLGSANAIYQSLNLIHDANPDIVVVVGADHVYRMDFAQMVEQHVHSGAKATVAAVRQPLNMADQFGVIEVDQNDPQKIAAFVEKPASTPGLAADPSQFLASMGNYVFDADALVAALHVDAERLDTKHDMGGDIIPYFVNQGEAGVYDFTLNEIPGSTERDRTYWRDVGTIDSFYDAHMDLISPLPVFNLYNSEWPIYTRQSISPPAKFVRGLNNTVGTALDSIVSSGVVISGGVVEGSVLSNDVYVATSSRVIDSVLMDKVQVGEGAVINRAIIDKNVKVPAGAAIGLDPELDRARGFKVTDSGITVLSKYQEVPEPGEHERQLAAKNLHLVPNAVKAAADQYPEVRESVDKVARTHAAAAAAEASPGARVS.

Alpha-D-glucose 1-phosphate contacts are provided by residues glycine 164, 181–182, and serine 199; that span reads EK.

Belongs to the bacterial/plant glucose-1-phosphate adenylyltransferase family. Homotetramer.

It carries out the reaction alpha-D-glucose 1-phosphate + ATP + H(+) = ADP-alpha-D-glucose + diphosphate. The protein operates within glycan biosynthesis; glycogen biosynthesis. Functionally, involved in the biosynthesis of ADP-glucose, a building block required for the elongation reactions to produce glycogen. Catalyzes the reaction between ATP and alpha-D-glucose 1-phosphate (G1P) to produce pyrophosphate and ADP-Glc. The protein is Glucose-1-phosphate adenylyltransferase of Pseudarthrobacter chlorophenolicus (strain ATCC 700700 / DSM 12829 / CIP 107037 / JCM 12360 / KCTC 9906 / NCIMB 13794 / A6) (Arthrobacter chlorophenolicus).